The sequence spans 321 residues: Methionyl-tRNA formyltransferase (321 aa).

A (6S)-5,6,7,8-tetrahydrofolate-binding site is contributed by 112-115 (SILP).

This sequence belongs to the Fmt family.

It catalyses the reaction L-methionyl-tRNA(fMet) + (6R)-10-formyltetrahydrofolate = N-formyl-L-methionyl-tRNA(fMet) + (6S)-5,6,7,8-tetrahydrofolate + H(+). Attaches a formyl group to the free amino group of methionyl-tRNA(fMet). The formyl group appears to play a dual role in the initiator identity of N-formylmethionyl-tRNA by promoting its recognition by IF2 and preventing the misappropriation of this tRNA by the elongation apparatus. This is Methionyl-tRNA formyltransferase from Shewanella pealeana (strain ATCC 700345 / ANG-SQ1).